The primary structure comprises 622 residues: Dynein axonemal assembly factor 1 (622 aa).

Over residues 1–11 (MHPEVSEQQAD) the composition is skewed to polar residues. A disordered region spans residues 1–80 (MHPEVSEQQA…ARNDRDDRGP (80 aa)). The segment covering 32 to 42 (VRKEEINETKE) has biased composition (basic and acidic residues). Over residues 48–59 (STTSCQSQKQQS) the composition is skewed to low complexity. A compositionally biased stretch (basic and acidic residues) spans 62 to 80 (SRLDCRSGYARNDRDDRGP). LRR repeat units lie at residues 101–123 (ALND…EEYT), 124–145 (GLRC…QAQS), 146–167 (ELRC…EPLQ), 168–189 (KLDA…SCLP), 190–211 (VLNT…QHLR), and 215–236 (RLCV…SVLE). Residues 249-288 (NPVTKHIPNYRRTVTVRLKQLTYLDDRPVFPKDRACAEAW) enclose the LRRCT domain. The span at 326-336 (EERKKARDKGE) shows a compositional bias: basic and acidic residues. Disordered regions lie at residues 326–360 (EERK…PLGE) and 399–431 (EEPD…TDGT). Composition is skewed to low complexity over residues 337 to 351 (TPLP…TSPE) and 415 to 428 (VATA…VAAT). Residue Ser-349 is modified to Phosphoserine. Residues Ser-464 and Ser-487 each carry the phosphoserine modification. 2 disordered regions span residues 480 to 503 (ISSL…EHTP) and 525 to 622 (RVPL…FGLD). A compositionally biased stretch (polar residues) spans 539–550 (APETQGQVFSTT).

Belongs to the DNAAF1 family.

The protein localises to the cell projection. Its subcellular location is the cilium. Functionally, cilium-specific protein required for the stability of the ciliary architecture. Plays a role in cytoplasmic preassembly of dynein arms. Involved in regulation of microtubule-based cilia and actin-based brush border microvilli. The polypeptide is Dynein axonemal assembly factor 1 (Dnaaf1) (Peromyscus polionotus (Oldfield mouse)).